The chain runs to 359 residues: Homeotic protein knotted-1 (359 aa).

2 disordered regions span residues 1 to 34 (MEEITQHFGVGASSHGHGHGQHHHHHHHHHPWAS) and 213 to 232 (LSSGSSEEDQEGSGGETELP). The span at 16 to 31 (GHGHGQHHHHHHHHHP) shows a compositional bias: basic residues. Residues 242 to 262 (ELKHHLLKKYSGYLSSLKQEL) form the ELK domain. Residues 263-326 (SKKKKKGKLP…NQRKRHWKPS (64 aa)) constitute a DNA-binding region (homeobox; TALE-type).

The protein belongs to the TALE/KNOX homeobox family. In terms of assembly, forms homodimers. Binds to MBP2C; this interaction reduces RNA binding capacity. In terms of tissue distribution, expressed in apical meristems of vegetative and floral stems as well as in the underlying ground meristem. Specifically expressed in vascular bundles developing both in the leaf and stem. Very low levels of expression in leaves.

It localises to the nucleus. The protein resides in the cell junction. The protein localises to the plasmodesma. Its subcellular location is the cytoplasm. Functionally, binds to RNA. Possible transcription factor that regulates genes involved in development. Mutations in KN-1 alter leaf development. Foci of cells along the lateral vein do not differentiate properly but continue to divide, forming knots. May participate in the switch from indeterminate to determinate cell fates. Probably binds to the DNA sequence 5'-TGAC-3'. In Zea mays (Maize), this protein is Homeotic protein knotted-1 (KN-1).